The following is a 480-amino-acid chain: M-phase inducer phosphatase cdc-25.2 (480 aa).

Polar residues predominate over residues Met-1–Glu-20. The disordered stretch occupies residues Met-1–Ser-35. Residues Phe-243–Ile-349 form the Rhodanese domain. Residues Thr-411–Pro-452 are disordered.

It belongs to the MPI phosphatase family.

The enzyme catalyses O-phospho-L-tyrosyl-[protein] + H2O = L-tyrosyl-[protein] + phosphate. Its function is as follows. Required for intestinal cell division following the 16E cell stage of embryogenesis. Regulates intestinal cell divisions and binucleations probably by modulating the activity of the cell cycle regulator wee-1.3 and by activating the cdk-1/cyb-1 complex. Plays a role in male tail development, via regulation of the cell divisions of the ray precursor cell lineages, perhaps acting together with cell cycle regulators cyl-1, cdk-1, cyb-3, and cyd-1. In Caenorhabditis elegans, this protein is M-phase inducer phosphatase cdc-25.2.